A 552-amino-acid chain; its full sequence is CTP synthase (552 aa).

The tract at residues 1–270 (MTKFVFVTGG…DGLICDKLRL (270 aa)) is amidoligase domain. Residue S13 coordinates CTP. Position 13 (S13) interacts with UTP. ATP-binding positions include 14–19 (SLGKGI) and D71. Mg(2+) contacts are provided by D71 and E144. Residues 151–153 (DIE), 191–196 (KTKPTQ), and K227 contribute to the CTP site. Residues 191-196 (KTKPTQ) and K227 each bind UTP. A Glutamine amidotransferase type-1 domain is found at 295-548 (KIAMVGKYVE…VKAAIERQKA (254 aa)). G357 contacts L-glutamine. Residue C384 is the Nucleophile; for glutamine hydrolysis of the active site. L-glutamine is bound by residues 385–388 (LGMQ), E408, and R474. Catalysis depends on residues H521 and E523.

Belongs to the CTP synthase family. In terms of assembly, homotetramer.

It carries out the reaction UTP + L-glutamine + ATP + H2O = CTP + L-glutamate + ADP + phosphate + 2 H(+). The catalysed reaction is L-glutamine + H2O = L-glutamate + NH4(+). The enzyme catalyses UTP + NH4(+) + ATP = CTP + ADP + phosphate + 2 H(+). Its pathway is pyrimidine metabolism; CTP biosynthesis via de novo pathway; CTP from UDP: step 2/2. With respect to regulation, allosterically activated by GTP, when glutamine is the substrate; GTP has no effect on the reaction when ammonia is the substrate. The allosteric effector GTP functions by stabilizing the protein conformation that binds the tetrahedral intermediate(s) formed during glutamine hydrolysis. Inhibited by the product CTP, via allosteric rather than competitive inhibition. Catalyzes the ATP-dependent amination of UTP to CTP with either L-glutamine or ammonia as the source of nitrogen. Regulates intracellular CTP levels through interactions with the four ribonucleotide triphosphates. The sequence is that of CTP synthase from Delftia acidovorans (strain DSM 14801 / SPH-1).